We begin with the raw amino-acid sequence, 1674 residues long: Kinesin-like protein KIF21A (1674 aa).

At Met1 the chain carries N-acetylmethionine. The Kinesin motor domain occupies 9–371 (SVRVAVRIRP…LKYANRARNI (363 aa)). 88 to 95 (GQTGAGKT) is an ATP binding site. Residues 365 to 575 (ANRARNIKNK…NREERSVAGK (211 aa)) are a coiled coil. Residue Ser524 is modified to Phosphoserine. 3 disordered regions span residues 556 to 641 (KKRL…DEKA), 779 to 804 (EEQEKARLTESRRNREIAQLKKDQRK), and 841 to 881 (SDKV…AQQK). The segment covering 560–597 (QKLEESNREERSVAGKEDNTDTDQEKKEEKGVSERENN) has biased composition (basic and acidic residues). Over residues 598 to 637 (ELEVEESQEVSDHEDEEEEEEEEEDDIDGGESSDESDSES) the composition is skewed to acidic residues. A compositionally biased stretch (polar residues) spans 851–865 (KLSSSDAPAQDTGSS). Coiled-coil stretches lie at residues 931 to 1019 (TDII…AKEE) and 1053 to 1083 (LQAAQKEAQIKVLEGRLKQTEITSATQNQLL). Positions 1116–1138 (VEDSTDEDAPLNSPGSEGSTLSS) are disordered. Over residues 1128-1138 (SPGSEGSTLSS) the composition is skewed to polar residues. An interaction with KANK1 and KANK2 region spans residues 1146–1167 (EVKPKNKARRRTTTQMELLYAD). Composition is skewed to polar residues over residues 1170–1179 (ELASDTSTGD) and 1196–1205 (GMNTETSGTS). The disordered stretch occupies residues 1170 to 1318 (ELASDTSTGD…SSLSEVHRSS (149 aa)). 4 positions are modified to phosphoserine: Ser1212, Ser1225, Ser1229, and Ser1239. Positions 1245–1262 (KAYEKAEKSKAKEQKHSD) are enriched in basic and acidic residues. Over residues 1288–1297 (NRLTVSQGNT) the composition is skewed to polar residues. WD repeat units follow at residues 1345–1382 (GHTKAVLCVDSTDDLLFTGSKDRTCKVWNLVTGQEIMS), 1385–1423 (GHPNNVVSVKYCNYTSLVFTVSTSYIKVWDIRDSAKCIR), 1449–1487 (SGENQINQIALNPTGTFLYAASGNAVRMWDLKRFQSTGK), 1490–1532 (GHLG…LGTV), 1541–1578 (PHYDGIEALTIQGDNLFSGSRDNGIKKWDLTQKDLLQQ), 1582–1621 (AHKDWVCALGVVPDHPVLLSGCRGGILKVWNMDTFMPVGE), and 1624–1661 (GHDSPINAICVNSTHIFTAADDRTVRIWKARNLQDGQI). Ser1662 carries the phosphoserine modification. Thr1664 is modified (phosphothreonine). Ser1673 is modified (phosphoserine).

Belongs to the TRAFAC class myosin-kinesin ATPase superfamily. Kinesin family. In terms of assembly, part of a cortical microtubule stabilization complex (CMSC) composed of KANK1, PPFIA1, PPFIBP1, ERC1/ELKS, PHLDB2/LL5beta, CLASPs, KIF21A and possibly additional interactors; within CMSCs KANK1 and PHLDB2/LL5beta seem to be the core components for recruiting microtubule-binding proteins KIF21A and CLASPs, whereas PPFIA1, PPFIBP1 and ERC1/ELKS serve as scaffolds for protein clustering. Interacts (via residues 1146-1167) with KANK1 (via ankyrin repeats 1-5) and KANK2 (via ankyrin repeats 1-5).

The protein resides in the cytoplasm. It localises to the cytoskeleton. It is found in the cell cortex. The protein localises to the cell projection. Its subcellular location is the axon. The protein resides in the dendrite. It localises to the growth cone. Processive microtubule plus-end directed motor protein involved in neuronal axon guidance. Is recruited by KANK1 to cortical microtubule stabilizing complexes (CMSCs) at focal adhesions (FAs) rims where it promotes microtubule capture and stability. Controls microtubule polymerization rate at axonal growth cones and suppresses microtubule growth without inducing microtubule disassembly once it reaches the cell cortex. The polypeptide is Kinesin-like protein KIF21A (KIF21A) (Homo sapiens (Human)).